We begin with the raw amino-acid sequence, 436 residues long: Peptidase B (436 aa).

Mn(2+)-binding residues include Lys201 and Asp206. Lys213 is an active-site residue. Asp224, Asp283, and Glu285 together coordinate Mn(2+). Arg287 is a catalytic residue.

It belongs to the peptidase M17 family. In terms of assembly, homohexamer. Requires Mn(2+) as cofactor.

The protein resides in the cytoplasm. It carries out the reaction Release of an N-terminal amino acid, Xaa, from a peptide or arylamide. Xaa is preferably Glu or Asp but may be other amino acids, including Leu, Met, His, Cys and Gln.. Probably plays an important role in intracellular peptide degradation. In Pectobacterium carotovorum subsp. carotovorum (strain PC1), this protein is Peptidase B.